A 542-amino-acid polypeptide reads, in one-letter code: Chaperonin GroEL (542 aa).

Residues 29–32 (TLGP), 86–90 (DGTTT), Gly413, 476–478 (NAA), and Asp492 each bind ATP. The segment at 522–542 (PDENGPAAVPDMGMGGMGGMM) is disordered.

This sequence belongs to the chaperonin (HSP60) family. In terms of assembly, forms a cylinder of 14 subunits composed of two heptameric rings stacked back-to-back. Interacts with the co-chaperonin GroES.

The protein localises to the cytoplasm. It carries out the reaction ATP + H2O + a folded polypeptide = ADP + phosphate + an unfolded polypeptide.. Together with its co-chaperonin GroES, plays an essential role in assisting protein folding. The GroEL-GroES system forms a nano-cage that allows encapsulation of the non-native substrate proteins and provides a physical environment optimized to promote and accelerate protein folding. The protein is Chaperonin GroEL of Listeria monocytogenes serotype 4a (strain HCC23).